Here is a 263-residue protein sequence, read N- to C-terminus: Hydroxyacylglutathione hydrolase (263 aa).

Zn(2+) contacts are provided by histidine 55, histidine 57, aspartate 59, histidine 60, histidine 117, aspartate 134, and histidine 172.

The protein belongs to the metallo-beta-lactamase superfamily. Glyoxalase II family. As to quaternary structure, monomer. It depends on Zn(2+) as a cofactor.

The enzyme catalyses an S-(2-hydroxyacyl)glutathione + H2O = a 2-hydroxy carboxylate + glutathione + H(+). Its pathway is secondary metabolite metabolism; methylglyoxal degradation; (R)-lactate from methylglyoxal: step 2/2. Thiolesterase that catalyzes the hydrolysis of S-D-lactoyl-glutathione to form glutathione and D-lactic acid. The sequence is that of Hydroxyacylglutathione hydrolase from Shewanella baltica (strain OS195).